Here is a 468-residue protein sequence, read N- to C-terminus: ATP synthase subunit beta (468 aa).

148–155 (GGAGVGKT) provides a ligand contact to ATP.

This sequence belongs to the ATPase alpha/beta chains family. As to quaternary structure, F-type ATPases have 2 components, CF(1) - the catalytic core - and CF(0) - the membrane proton channel. CF(1) has five subunits: alpha(3), beta(3), gamma(1), delta(1), epsilon(1). CF(0) has three main subunits: a(1), b(2) and c(9-12). The alpha and beta chains form an alternating ring which encloses part of the gamma chain. CF(1) is attached to CF(0) by a central stalk formed by the gamma and epsilon chains, while a peripheral stalk is formed by the delta and b chains.

The protein resides in the cell inner membrane. The catalysed reaction is ATP + H2O + 4 H(+)(in) = ADP + phosphate + 5 H(+)(out). Its function is as follows. Produces ATP from ADP in the presence of a proton gradient across the membrane. The catalytic sites are hosted primarily by the beta subunits. This is ATP synthase subunit beta from Xanthomonas campestris pv. campestris (strain 8004).